The sequence spans 1133 residues: Protein TOPLESS-RELATED PROTEIN 2 (1133 aa).

Residues 4-36 (LSRELVFLILQFLDEEKFKETVHKLEQESAFYF) form the LisH domain. Residues 34 to 92 (FYFNMKHFEDLVQGGEWDEVEKYLSGFTKVEDNRYSMKIFFEIRKQKYLEALDRHDRAK) form the CTLH domain. 12 WD repeats span residues 344 to 384 (NQGS…RIAH), 451 to 492 (AHIG…KQYT), 495 to 536 (GHEA…SRVD), 539 to 582 (APGH…IKRT), 586 to 625 (FRKRSLGVVQFDTTRNRFLAAGDEFVVKFWDMDNTNILTT), 630 to 669 (GGLPASPRLRFNREGSLLAVTANENGIKILANTDGQRLLR), 771 to 810 (ATSSKVVRLLYTNNGVALLALGSNAVHKLWKWQRTDRNPN), 838 to 876 (NPEEATACIALSKNDSYVMSASGGKVSLFNMMTFKVMTT), 879 to 919 (APPP…VKSK), 922 to 961 (GHSKKITGLAFSQSMNMLVSSGADAQLCAWSIDGWEKKKS), 970 to 1011 (RSGA…RSWS), and 1015 to 1054 (ALPAPISSAIYSCDGLLIYAGFCDGAIGVFEAESLRLRCR). Positions 1102 to 1133 (DSDPKWGVAPPQDNGTHPTISAAPAAANKPEV) are disordered.

Tetramer. Interacts with D53, probably via the EAR motifs. Binds to AP2-1/TOE1, AP2-3/SNB and AP2-2/IDS1. Interacts with WOX1. Interacts with MOF1. In terms of tissue distribution, expressed in stems and panicles. Detected in roots, seeds, leaves and sheath. Expressed in the meristem and lateral organ primordia.

Its subcellular location is the nucleus. Transcriptional corepressor involved in branch formation regulation, presumably by suppressing primary branch formation and promoting secondary branch formation. Required for the cell elongation in the first internode and pollen development. Probable downstream regulator of strigolactones signaling important in axillary meristem maintenance. Acts in auxin signaling and is associated with the regulation of histone deacetylation. Essential for the function of miR172 microRNA and its target genes in regulating panicle development. This Oryza sativa subsp. japonica (Rice) protein is Protein TOPLESS-RELATED PROTEIN 2.